We begin with the raw amino-acid sequence, 589 residues long: Probable 9-cis-epoxycarotenoid dioxygenase NCED5, chloroplastic (589 aa).

Residues methionine 1–serine 45 constitute a chloroplast transit peptide. Positions serine 21 to phenylalanine 34 are enriched in low complexity. Residues serine 21–aspartate 51 are disordered. Fe cation-binding residues include histidine 287, histidine 336, histidine 401, and histidine 576.

The protein belongs to the carotenoid oxygenase family. Interacts in vitro with VAR3. The cofactor is Fe(2+). In terms of tissue distribution, detected only in seeds.

The protein localises to the plastid. It localises to the chloroplast thylakoid membrane. It carries out the reaction a 9-cis-epoxycarotenoid + O2 = a 12'-apo-carotenal + 2-cis,4-trans-xanthoxin. It catalyses the reaction 9-cis-violaxanthin + O2 = (3S,5R,6S)-5,6-epoxy-3-hydroxy-5,6-dihydro-12'-apo-beta-caroten-12'-al + 2-cis,4-trans-xanthoxin. The catalysed reaction is 9'-cis-neoxanthin + O2 = (3S,5R,6R)-3,5-dihydroxy-6,7-didehydro-5,6-dihydro-12'-apo-beta-caroten-12'-al + 2-cis,4-trans-xanthoxin. Functionally, has a 11,12(11',12') 9-cis epoxycarotenoid cleavage activity. Catalyzes the first step of abscisic-acid biosynthesis from carotenoids. This Arabidopsis thaliana (Mouse-ear cress) protein is Probable 9-cis-epoxycarotenoid dioxygenase NCED5, chloroplastic (NCED5).